Reading from the N-terminus, the 129-residue chain is Ribosome-binding factor A (129 aa).

The protein belongs to the RbfA family. Monomer. Binds 30S ribosomal subunits, but not 50S ribosomal subunits or 70S ribosomes.

The protein localises to the cytoplasm. Its function is as follows. One of several proteins that assist in the late maturation steps of the functional core of the 30S ribosomal subunit. Associates with free 30S ribosomal subunits (but not with 30S subunits that are part of 70S ribosomes or polysomes). Required for efficient processing of 16S rRNA. May interact with the 5'-terminal helix region of 16S rRNA. The polypeptide is Ribosome-binding factor A (Stutzerimonas stutzeri (strain A1501) (Pseudomonas stutzeri)).